The sequence spans 276 residues: Orotidine 5'-phosphate decarboxylase (276 aa).

Lys-95 functions as the Proton donor in the catalytic mechanism.

This sequence belongs to the OMP decarboxylase family. Type 2 subfamily.

The catalysed reaction is orotidine 5'-phosphate + H(+) = UMP + CO2. The protein operates within pyrimidine metabolism; UMP biosynthesis via de novo pathway; UMP from orotate: step 2/2. This is Orotidine 5'-phosphate decarboxylase (pyrF) from Mycolicibacterium smegmatis (strain ATCC 700084 / mc(2)155) (Mycobacterium smegmatis).